Reading from the N-terminus, the 461-residue chain is 3-deoxy-D-manno-octulosonic acid transferase (461 aa).

The chain crosses the membrane as a helical; Signal-anchor span at residues 2–22 (MLLYYTLSFILLPVYFIIIFI). The 42-residue stretch at 47 to 88 (SALDFIQMSVNKEGFTDHKTTSYVDMHRNASLMYKLSLERSY) folds into the RPE1 insert domain. Glutamate 102 functions as the Proton acceptor in the catalytic mechanism. CMP is bound by residues 306 to 307 (PR), 347 to 349 (FGE), and 372 to 375 (NILE).

This sequence belongs to the glycosyltransferase group 1 family. Glycosyltransferase 30 subfamily.

The protein localises to the cell inner membrane. The enzyme catalyses lipid IVA (E. coli) + CMP-3-deoxy-beta-D-manno-octulosonate = alpha-Kdo-(2-&gt;6)-lipid IVA (E. coli) + CMP + H(+). The protein operates within bacterial outer membrane biogenesis; LPS core biosynthesis. In terms of biological role, involved in lipopolysaccharide (LPS) biosynthesis. Catalyzes the transfer of 3-deoxy-D-manno-octulosonate (Kdo) residue(s) from CMP-Kdo to lipid IV(A), the tetraacyldisaccharide-1,4'-bisphosphate precursor of lipid A. This is 3-deoxy-D-manno-octulosonic acid transferase (waaA) from Rickettsia prowazekii (strain Madrid E).